The following is a 626-amino-acid chain: tRNA uridine 5-carboxymethylaminomethyl modification enzyme MnmG (626 aa).

Position 13–18 (13–18 (GGGHAG)) interacts with FAD. An NAD(+)-binding site is contributed by 273–287 (GPRYCPSIEDKIHRF).

This sequence belongs to the MnmG family. Homodimer. Heterotetramer of two MnmE and two MnmG subunits. FAD serves as cofactor.

The protein resides in the cytoplasm. Its function is as follows. NAD-binding protein involved in the addition of a carboxymethylaminomethyl (cmnm) group at the wobble position (U34) of certain tRNAs, forming tRNA-cmnm(5)s(2)U34. This is tRNA uridine 5-carboxymethylaminomethyl modification enzyme MnmG from Acinetobacter baumannii (strain AYE).